Consider the following 220-residue polypeptide: dITP/XTP pyrophosphatase (220 aa).

Position 13–18 (Ser13–Lys18) interacts with substrate. The Mg(2+) site is built by Asp45 and Asp74. Asp74 (proton acceptor) is an active-site residue. Substrate contacts are provided by residues Ser75, Phe163–Asp166, Lys186, and His199–Arg200.

The protein belongs to the HAM1 NTPase family. As to quaternary structure, homodimer. The cofactor is Mg(2+).

The catalysed reaction is XTP + H2O = XMP + diphosphate + H(+). The enzyme catalyses dITP + H2O = dIMP + diphosphate + H(+). It carries out the reaction ITP + H2O = IMP + diphosphate + H(+). Functionally, pyrophosphatase that catalyzes the hydrolysis of nucleoside triphosphates to their monophosphate derivatives, with a high preference for the non-canonical purine nucleotides XTP (xanthosine triphosphate), dITP (deoxyinosine triphosphate) and ITP. Seems to function as a house-cleaning enzyme that removes non-canonical purine nucleotides from the nucleotide pool, thus preventing their incorporation into DNA/RNA and avoiding chromosomal lesions. This is dITP/XTP pyrophosphatase from Brucella melitensis biotype 1 (strain ATCC 23456 / CCUG 17765 / NCTC 10094 / 16M).